Consider the following 868-residue polypeptide: Lysosomal cholesterol signaling protein (868 aa).

Over 1–36 (MDSYFSAKNSTLAGDMNATWPASHGFNATGDPPSMS) the chain is Lumenal. The tract at residues 1-368 (MDSYFSAKNS…SAWLLTFPTM (368 aa)) is PIN-like transporter. N-linked (GlcNAc...) asparagine glycosylation is found at N9, N17, and N27. A helical membrane pass occupies residues 37–57 (ITRLFPALLECFGIVLCGYIA). Cholesterol-binding residues include F41 and Y55. Topologically, residues 58 to 77 (GRANIITSTQAKGLGNFVSR) are cytoplasmic. The chain crosses the membrane as a helical span at residues 78–98 (FALPALLFKNMVVLNFSNVDW). The Lumenal segment spans residues 99–102 (AFLY). A helical membrane pass occupies residues 103-123 (SVLIGKASVFFIVCVLTLLVA). Over 124-131 (SPESRFSK) the chain is Cytoplasmic. A discontinuously helical membrane pass occupies residues 132–152 (AGLFPIFATQSNDFALGYPIV). The Lumenal segment spans residues 153–165 (EALYQSTYPEYLQ). A helical transmembrane segment spans residues 166–186 (YIYLVAPISLMMLNPIGFIFC). Over 187–211 (EIQKSKDTQNASQNKAKIVGLGFLR) the chain is Cytoplasmic. A discontinuously helical transmembrane segment spans residues 212–232 (VLQNPIVFMVFVGIAFNFILD). Topologically, residues 233-241 (KKIPVYMEN) are lumenal. A discontinuously helical membrane pass occupies residues 242–262 (FLDGLANSFSGSALFYLGLTM). Topologically, residues 263-271 (VGKIRRLKK) are cytoplasmic. Cholesterol-binding residues include G264, K265, and I266. A helical transmembrane segment spans residues 272-292 (SAFVVLTLLITAKLLVLPLLC). At 293-313 (REMVELLDKGDSVVNHTSLSN) the chain is on the lumenal side. The N-linked (GlcNAc...) asparagine glycan is linked to N307. The chain crosses the membrane as a discontinuously helical span at residues 314–334 (YAFLYGVFPVAPGVAIFATQF). Over 335–344 (NMEVEIITSG) the chain is Cytoplasmic. Residues 345–365 (MVISTFVSAPIMYVSAWLLTF) form a helical membrane-spanning segment. Over 366 to 379 (PTMDAKPLAYAIQN) the chain is Lumenal. The tract at residues 378–715 (QNVSFDISII…FGIFGLDKHL (338 aa)) is GPCR. A glycan (N-linked (GlcNAc...) asparagine) is linked at N379. The helical transmembrane segment at 380 to 400 (VSFDISIISLVSLIWSLSILL) threads the bilayer. Topologically, residues 401-412 (LSKKYKQLPHML) are cytoplasmic. A helical membrane pass occupies residues 413 to 433 (TANLLIAQTIVCAGMMIWNFV). The Lumenal segment spans residues 434–436 (KEK). Residues 437 to 457 (NFVGQILVFVLLYSSLYSTYL) traverse the membrane as a helical segment. Over 458–478 (WTGLLAVSLFLLKKRESVQLP) the chain is Cytoplasmic. The helical transmembrane segment at 479-499 (VGIIIISGWGIPALLVGVLLI) threads the bilayer. The Lumenal portion of the chain corresponds to 500–518 (TGKHNGDSIDSAFFYGKEQ). The chain crosses the membrane as a helical span at residues 519–539 (MITTAVTLFCSILIAGVSLMC). Residues 540 to 658 (MNRTTQAGHY…GDPQLTRHVL (119 aa)) are Cytoplasmic-facing. Residues 550-582 (EGFGQSQNHKPVEPGSTAFEENPAPTNEPELFP) are disordered. Position 655 (R655) interacts with cholesterol. A helical membrane pass occupies residues 659–679 (LCLLLIIGLFANLSSCLWWLF). Over 680-689 (NHETGRLYVE) the chain is Lumenal. A helical membrane pass occupies residues 690–710 (LQFFCAVFNFGQGFISFGIFG). At 711–868 (LDKHLIILPF…SSPPSVSPKT (158 aa)) the chain is on the cytoplasmic side. In terms of domain architecture, DEP spans 755-833 (YHRDLCIRNI…DEYLFYRFLQ (79 aa)). Residues 836 to 868 (PEQSPPARTLRDHQEESYKEIGHSSPPSVSPKT) are disordered. The span at 844–857 (TLRDHQEESYKEIG) shows a compositional bias: basic and acidic residues.

As to quaternary structure, homodimer; via the transporter region and DEP domain. Interacts with the GATOR1 complex; preventing interaction between GATOR1 and KICSTOR; interaction is disrupted upon cholesterol starvation. In terms of tissue distribution, widely expressed in adult tissues and during development. In brain, widely distributed in forebrain regions, while it shows a more restricted distribution in the midbrain and hindbrain regions. Expressed at highest level in the lateral part of striatum and hippocampus.

It is found in the lysosome membrane. Cholesterol-binding protein that acts as a regulator of mTORC1 signaling pathway. Acts as a sensor of cholesterol to signal cholesterol sufficiency to mTORC1: in presence of cholesterol, binds cholesterol, leading to disruption of the interaction between the GATOR1 and KICSTOR complexes and promotion of mTORC1 signaling. Upon cholesterol starvation, GPR155/LYCHOS is unable to perturb the association between GATOR1 and KICSTOR, leading to mTORC1 signaling inhibition. Binds indole-3-acetic acid and may play a role in tryptophan metabolism. This Mus musculus (Mouse) protein is Lysosomal cholesterol signaling protein.